The primary structure comprises 326 residues: Ketol-acid reductoisomerase (NADP(+)) (326 aa).

A KARI N-terminal Rossmann domain is found at 2 to 182 (AKIYGDEDAS…GFTRAGVIKT (181 aa)). NADP(+) is bound by residues 25–28 (YGSQ), Arg-48, Ser-53, and 83–86 (DEVQ). His-108 is a catalytic residue. Gly-134 contributes to the NADP(+) binding site. The KARI C-terminal knotted domain occupies 183–325 (TFREEVETDL…ERLRKMMGFE (143 aa)). Positions 191, 195, 227, and 231 each coordinate Mg(2+). Ser-252 provides a ligand contact to substrate.

This sequence belongs to the ketol-acid reductoisomerase family. Requires Mg(2+) as cofactor.

It catalyses the reaction (2R)-2,3-dihydroxy-3-methylbutanoate + NADP(+) = (2S)-2-acetolactate + NADPH + H(+). It carries out the reaction (2R,3R)-2,3-dihydroxy-3-methylpentanoate + NADP(+) = (S)-2-ethyl-2-hydroxy-3-oxobutanoate + NADPH + H(+). It functions in the pathway amino-acid biosynthesis; L-isoleucine biosynthesis; L-isoleucine from 2-oxobutanoate: step 2/4. Its pathway is amino-acid biosynthesis; L-valine biosynthesis; L-valine from pyruvate: step 2/4. Involved in the biosynthesis of branched-chain amino acids (BCAA). Catalyzes an alkyl-migration followed by a ketol-acid reduction of (S)-2-acetolactate (S2AL) to yield (R)-2,3-dihydroxy-isovalerate. In the isomerase reaction, S2AL is rearranged via a Mg-dependent methyl migration to produce 3-hydroxy-3-methyl-2-ketobutyrate (HMKB). In the reductase reaction, this 2-ketoacid undergoes a metal-dependent reduction by NADPH to yield (R)-2,3-dihydroxy-isovalerate. In Methanopyrus kandleri (strain AV19 / DSM 6324 / JCM 9639 / NBRC 100938), this protein is Ketol-acid reductoisomerase (NADP(+)).